Consider the following 264-residue polypeptide: tRNA pseudouridine synthase A (264 aa).

Aspartate 51 functions as the Nucleophile in the catalytic mechanism. Tyrosine 109 serves as a coordination point for substrate.

This sequence belongs to the tRNA pseudouridine synthase TruA family. In terms of assembly, homodimer.

The enzyme catalyses uridine(38/39/40) in tRNA = pseudouridine(38/39/40) in tRNA. In terms of biological role, formation of pseudouridine at positions 38, 39 and 40 in the anticodon stem and loop of transfer RNAs. The sequence is that of tRNA pseudouridine synthase A from Photorhabdus laumondii subsp. laumondii (strain DSM 15139 / CIP 105565 / TT01) (Photorhabdus luminescens subsp. laumondii).